Consider the following 317-residue polypeptide: 3'-5' exoribonuclease YhaM (317 aa).

The segment at residues 17-90 (FLLIKESTRG…QLKILSIRLS (74 aa)) is a DNA-binding region (OB). The 117-residue stretch at 163–279 (HVVSMLAIGK…LHLIDLIDAK (117 aa)) folds into the HD domain.

The protein belongs to the YhaM family.

Functionally, shows a 3'-5' exoribonuclease activity. The sequence is that of 3'-5' exoribonuclease YhaM from Oceanobacillus iheyensis (strain DSM 14371 / CIP 107618 / JCM 11309 / KCTC 3954 / HTE831).